The following is a 312-amino-acid chain: Glyoxylate/hydroxypyruvate reductase A (312 aa).

Arginine 227 is a catalytic residue. The Proton donor role is filled by histidine 275.

Belongs to the D-isomer specific 2-hydroxyacid dehydrogenase family. GhrA subfamily.

It is found in the cytoplasm. It catalyses the reaction glycolate + NADP(+) = glyoxylate + NADPH + H(+). The enzyme catalyses (R)-glycerate + NAD(+) = 3-hydroxypyruvate + NADH + H(+). The catalysed reaction is (R)-glycerate + NADP(+) = 3-hydroxypyruvate + NADPH + H(+). Its function is as follows. Catalyzes the NADPH-dependent reduction of glyoxylate and hydroxypyruvate into glycolate and glycerate, respectively. This Escherichia coli (strain 55989 / EAEC) protein is Glyoxylate/hydroxypyruvate reductase A.